The sequence spans 246 residues: MSYVEQYYESISRLLRQTVDEGEEVLGKAADIMVHAIKEGKSLYLFGASHAGIIAEDAFYRAGGLALFNPIFSPALMLNVEPITLTSKLERLEGYGTILLESKPVKQGDVLFIHSVSGRNPVAIDMAIAAKQKGMTVISLTNVSYSKSVESRHSSGKRLFEVSDLVMDNHGEPGDAAVSVKSLSQKVAPTSTIVGSFIIHSIVLKMIEQLEEAGREVPVFRSANLDGGDAYNEAMMERHKHQIHYM.

An SIS domain is found at 33–212 (MVHAIKEGKS…VLKMIEQLEE (180 aa)).

This sequence belongs to the UPF0309 family.

This Shouchella clausii (strain KSM-K16) (Alkalihalobacillus clausii) protein is UPF0309 protein ABC0887.